Reading from the N-terminus, the 312-residue chain is Malate dehydrogenase (312 aa).

Residues 7-13 (GAAGGIG) and Asp-34 contribute to the NAD(+) site. Substrate is bound by residues Arg-81 and Arg-87. Residues Asn-94 and 117-119 (ITN) each bind NAD(+). Residues Asn-119 and Arg-153 each coordinate substrate. His-177 acts as the Proton acceptor in catalysis. Residue Met-227 participates in NAD(+) binding.

It belongs to the LDH/MDH superfamily. MDH type 1 family. Homodimer.

The enzyme catalyses (S)-malate + NAD(+) = oxaloacetate + NADH + H(+). Functionally, catalyzes the reversible oxidation of malate to oxaloacetate. This Moritella sp. (strain 2D2) protein is Malate dehydrogenase (mdh).